The sequence spans 326 residues: Glyceraldehyde-3-phosphate dehydrogenase, cytosolic (326 aa).

NAD(+) is bound by residues 2-3, Asp-24, and Arg-71; that span reads RI. Residues 142 to 144, Thr-173, 202 to 203, and Arg-225 contribute to the D-glyceraldehyde 3-phosphate site; these read SCT and TG. The active-site Nucleophile is the Cys-143. Asn-307 contributes to the NAD(+) binding site.

The protein belongs to the glyceraldehyde-3-phosphate dehydrogenase family.

The protein localises to the cytoplasm. The catalysed reaction is D-glyceraldehyde 3-phosphate + phosphate + NAD(+) = (2R)-3-phospho-glyceroyl phosphate + NADH + H(+). Its pathway is carbohydrate degradation; glycolysis; pyruvate from D-glyceraldehyde 3-phosphate: step 1/5. In terms of biological role, key enzyme in glycolysis that catalyzes the first step of the pathway by converting D-glyceraldehyde 3-phosphate (G3P) into 3-phospho-D-glyceroyl phosphate. Essential for the maintenance of cellular ATP levels and carbohydrate metabolism. The polypeptide is Glyceraldehyde-3-phosphate dehydrogenase, cytosolic (GAPC) (Nicotiana tabacum (Common tobacco)).